A 284-amino-acid polypeptide reads, in one-letter code: Ribosomal RNA small subunit methyltransferase A (284 aa).

S-adenosyl-L-methionine-binding residues include histidine 23, leucine 25, glycine 50, glutamate 71, aspartate 92, and asparagine 121.

Belongs to the class I-like SAM-binding methyltransferase superfamily. rRNA adenine N(6)-methyltransferase family. RsmA subfamily.

It localises to the cytoplasm. It carries out the reaction adenosine(1518)/adenosine(1519) in 16S rRNA + 4 S-adenosyl-L-methionine = N(6)-dimethyladenosine(1518)/N(6)-dimethyladenosine(1519) in 16S rRNA + 4 S-adenosyl-L-homocysteine + 4 H(+). In terms of biological role, specifically dimethylates two adjacent adenosines (A1518 and A1519) in the loop of a conserved hairpin near the 3'-end of 16S rRNA in the 30S particle. May play a critical role in biogenesis of 30S subunits. This chain is Ribosomal RNA small subunit methyltransferase A, found in Verminephrobacter eiseniae (strain EF01-2).